The chain runs to 157 residues: DNA-binding protein MNB1B (157 aa).

3 disordered regions span residues M1–P45, F59–D87, and Y109–E157. Composition is skewed to basic and acidic residues over residues A10–A27 and A76–D87. The HMG box DNA-binding region spans P41–N110. Acidic residues-rich tracts occupy residues E124–S133 and N141–E157. A Phosphoserine; by CK2 modification is found at S149.

Expressed in all tissues examined.

The protein resides in the nucleus. Its function is as follows. Recognizes an AAGG motif at the MNF1-binding site. This is DNA-binding protein MNB1B (MNB1B) from Zea mays (Maize).